We begin with the raw amino-acid sequence, 383 residues long: E3 ubiquitin-protein ligase SPL2 (383 aa).

Residues 1–14 (MSSPERALLNLLTD) are Cytoplasmic-facing. A helical membrane pass occupies residues 15 to 35 (IALSFDGAILGLTLAVSAVGS). Residues 36 to 269 (ALKYASTNAA…MIEDLMEQTN (234 aa)) lie on the Chloroplast intermembrane side of the membrane. The chain crosses the membrane as a helical span at residues 270-290 (FIFLGSVILGIVSVGILSYAA). Residues 291–383 (VRTWNKWKQW…IRGSMRVYYS (93 aa)) lie on the Cytoplasmic side of the membrane. The RING-type zinc finger occupies 331-370 (CVICVSRRRVPAFIPCGHVVCCRRCASTVERELNPKCPVC).

Its subcellular location is the plastid. The protein resides in the chloroplast outer membrane. It carries out the reaction S-ubiquitinyl-[E2 ubiquitin-conjugating enzyme]-L-cysteine + [acceptor protein]-L-lysine = [E2 ubiquitin-conjugating enzyme]-L-cysteine + N(6)-ubiquitinyl-[acceptor protein]-L-lysine.. The protein operates within protein modification; protein ubiquitination. Possesses E3 ubiquitin-protein ligase activity. The protein is E3 ubiquitin-protein ligase SPL2 of Arabidopsis thaliana (Mouse-ear cress).